An 872-amino-acid chain; its full sequence is Paladin (872 aa).

Positions methionine 1 to leucine 37 are disordered. The N-myristoyl glycine moiety is linked to residue glycine 2. A coiled-coil region spans residues arginine 186 to alanine 210.

Belongs to the paladin family.

It is found in the cytoplasm. The protein localises to the cytosol. This Xenopus tropicalis (Western clawed frog) protein is Paladin (pald1).